A 543-amino-acid polypeptide reads, in one-letter code: Acrosin-binding protein (543 aa).

The N-terminal stretch at 1–25 (MGQPAAGSILTLLRVLLLPLGPALA) is a signal peptide. Positions 26 to 106 (QDSPSAPTPG…ASWFESFCQF (81 aa)) are pro-ACR binding. Positions 26–276 (QDSPSAPTPG…DPHSFTARVR (251 aa)) are cleaved as a propeptide — removed in mature form. A disordered region spans residues 187–239 (AGQEQAAGHKQEQGQEQHKQDPTQEHKQDDGQEQEEQEEEQEEEGKQEEGQSV). Basic and acidic residues predominate over residues 193–216 (AGHKQEQGQEQHKQDPTQEHKQDD). The span at 217–232 (GQEQEEQEEEQEEEGK) shows a compositional bias: acidic residues. Positions 319 to 427 (LPHKEALLVL…TQAGTSESGR (109 aa)) are pro-ACR binding.

In terms of assembly, binds proacrosin (ACR). Does not bind the mature form of ACR. The N-terminus is blocked. Post-translationally, phosphorylated on Tyr residues in capacitated sperm. In terms of processing, synthesized as a 60-kDa precursor, the 32-kDa mature form is post-translationally produced by the removal of the N-terminal half of the precursor during sperm maturation in the testis and/or epididymis. In terms of tissue distribution, specifically expressed in testis.

The protein localises to the secreted. It is found in the cytoplasmic vesicle. It localises to the secretory vesicle. Its subcellular location is the acrosome. Its function is as follows. Acrosomal protein that maintains proacrosin (pro-ACR) as an enzymatically inactive zymogen in the acrosome. Involved also in the acrosome formation. This Cavia porcellus (Guinea pig) protein is Acrosin-binding protein (ACRBP).